Here is a 546-residue protein sequence, read N- to C-terminus: Chaperonin GroEL (546 aa).

ATP contacts are provided by residues 29–32 (TMGP), Lys50, 86–90 (DGTTT), Gly414, and Asp492.

Belongs to the chaperonin (HSP60) family. Forms a cylinder of 14 subunits composed of two heptameric rings stacked back-to-back. Interacts with the co-chaperonin GroES.

The protein localises to the cytoplasm. The enzyme catalyses ATP + H2O + a folded polypeptide = ADP + phosphate + an unfolded polypeptide.. In terms of biological role, together with its co-chaperonin GroES, plays an essential role in assisting protein folding. The GroEL-GroES system forms a nano-cage that allows encapsulation of the non-native substrate proteins and provides a physical environment optimized to promote and accelerate protein folding. This chain is Chaperonin GroEL, found in Helicobacter pylori (strain G27).